A 314-amino-acid chain; its full sequence is 1D-myo-inositol 2-acetamido-2-deoxy-alpha-D-glucopyranoside deacetylase 2 (314 aa).

Zn(2+) is bound by residues histidine 25, aspartate 28, and histidine 161.

This sequence belongs to the MshB deacetylase family. The cofactor is Zn(2+).

It catalyses the reaction 1D-myo-inositol 2-acetamido-2-deoxy-alpha-D-glucopyranoside + H2O = 1D-myo-inositol 2-amino-2-deoxy-alpha-D-glucopyranoside + acetate. In terms of biological role, catalyzes the deacetylation of 1D-myo-inositol 2-acetamido-2-deoxy-alpha-D-glucopyranoside (GlcNAc-Ins) in the mycothiol biosynthesis pathway. This chain is 1D-myo-inositol 2-acetamido-2-deoxy-alpha-D-glucopyranoside deacetylase 2, found in Frankia casuarinae (strain DSM 45818 / CECT 9043 / HFP020203 / CcI3).